The following is a 606-amino-acid chain: Scavenger receptor class A member 3 (606 aa).

Topologically, residues 1-56 (MKVRSAGSDRDVLCVTEEDLAGEDEDMPSFPCTQEGRAGPRCNRCQKNLSLHTSVR) are cytoplasmic. Residues 57-77 (ILYLFLTLLLVAVAVLASLVF) form a helical; Signal-anchor for type II membrane protein membrane-spanning segment. Residues 78-606 (RKVDSLSEDI…PGPPGNQSPY (529 aa)) lie on the Extracellular side of the membrane. Residues N115, N182, N224, N257, N313, N337, N365, N400, N430, and N451 are each glycosylated (N-linked (GlcNAc...) asparagine). The segment at 455 to 606 (IRGVPGPPGP…PGPPGNQSPY (152 aa)) is disordered. Collagen-like domains are found at residues 456–558 (RGVP…PGPS) and 559–601 (GPQG…GPPG). Residues 497 to 516 (PQGQPGEPGPVGERGPAGPR) are compositionally biased toward low complexity. Gly residues predominate over residues 526 to 535 (GSFGTGGPRG). Composition is skewed to pro residues over residues 548 to 558 (PEGPPGSPGPS) and 591 to 606 (PGLP…QSPY).

It localises to the endoplasmic reticulum membrane. The protein localises to the golgi apparatus membrane. In terms of biological role, seems to protect cells by scavenging oxidative molecules or harmful products of oxidation. In Mus musculus (Mouse), this protein is Scavenger receptor class A member 3 (Scara3).